A 333-amino-acid polypeptide reads, in one-letter code: Adenosine deaminase (333 aa).

Residues histidine 12 and histidine 14 each coordinate Zn(2+). The substrate site is built by histidine 14, aspartate 16, and glycine 170. Histidine 197 is a Zn(2+) binding site. The active-site Proton donor is the glutamate 200. Residue aspartate 278 coordinates Zn(2+). Residue aspartate 279 coordinates substrate.

Belongs to the metallo-dependent hydrolases superfamily. Adenosine and AMP deaminases family. Adenosine deaminase subfamily. It depends on Zn(2+) as a cofactor.

The enzyme catalyses adenosine + H2O + H(+) = inosine + NH4(+). It carries out the reaction 2'-deoxyadenosine + H2O + H(+) = 2'-deoxyinosine + NH4(+). In terms of biological role, catalyzes the hydrolytic deamination of adenosine and 2-deoxyadenosine. The polypeptide is Adenosine deaminase (Photorhabdus laumondii subsp. laumondii (strain DSM 15139 / CIP 105565 / TT01) (Photorhabdus luminescens subsp. laumondii)).